Consider the following 1955-residue polypeptide: MEGTCSEEENLAKRVTPTAVTSGTYGTHVVDTTDLALSDVVIGCGSTIYETSDSIGSDVMLGLSSHGVSSVSGLDRDLNSFKKRIDANTEEQREHADMMVGLQRKIEEYRRRIVDAEKQVSIQKANDDVSFSIKETADTWLPDMKSDAADYEWASRLDEERRRNDELHMQITQQQVDLQRLQKYFEANMQEKEKIYQTREKNLAYYLNAEQRKMLDLWEELQRVRRQFADYKEQTERDLENQKNEVAKVTQSVGGMAGRLNTSSHGDSGLVQDVVLLEAMRRFRELQAVPVGASADDYNALMKKYEETVERVIELESHGDGSTAKMLSLEAELRRTKDKFIECSEFLRKLGDLAAGSYRGDERTSKIVSLSPGGMSLPSEIYRSVRNILRNHDSEMQHIQRKLKNSDTQVCELTTRLEGTEEARRRSDKQLVDAKREINIQQRAVDDANRELRRVEDRLHIMESEKIVAENARQQLEEEVRRLTLQVDQSKADGERRVVEEGEIQKRIVEDEYRSMISELTRRMNAFQDENKRLKNDLGCTKERLKNVEFEYNSTVRKLEDKDIALKHLEDTKLDLLKDLENQRTRYDAVTNELDTLQTTFETSTKNIAQLEANIKEINLMRDEISKEKDSLAQKLADVTHKLEIETVRREDIQRSCVGHSEDVEKQRLQIIEYEREVMALRRLNDELDTNVKTGQAKVTSLENSIISVQTEVTKLTTLNDKLQKEKQSIMSSKQKADTDVDLLKEKLRKLEQECDKLKEENKALHEDEQIARQMCKEEASRIHLLERDLKDAMTEVEELKKQLQKMDEENSERLESVLRTKISSDTVDTSEIAEYTEVKVKELREKYKADLERLQSNKDDLERRVQILEDELAERQRIVERQRTEMNDLKLEYQLESDRLRAEMATVELKYQSEVEDERDQRSRDADSWKVTSEELRSKISFMEKMLEEAKHRETVLREEATEWEEKHDIISNESLKLRNEIERIRSDAEEDIQKWKKDVHMAQNELKNLERVCETLRSQLTAANDRVASLNTTINEQTSKIRELNSHEHRLEEDLADSRATSSAIENDLGNATGRLRSSEEHNAILQSENRKSKTEIEALKHQIDTIMNTKESCESEVERLKKKIVQTTTITKEQNEKIEKLRIEHDHLERDYREKTKEVDRLKEVEKTFELKVNRARQELDEFSKKLIVTETERNAISGEAQKLDKEVQLVKEQLQYKSDEFHKALDELANAHRISEEGRVNAIHQLEARRFEIDDLKSRLENSEQRLATLQQEYVNADKERGALNDAMRRFQATISRSVVAEEHVDVSTIETQMQKLMSRIEAIERERNEYRDSLNRLKNRCSTSYSSVDRQETVYRTFEERVISAEDERRKVELKLSSMKEMLKSQEEKLKQRDEERRNLKSNIVTFELEARAKDAQIRHLNDLLKRVQAELENSQNDNRALRERQEQYETNRIHLEQRLPTDEGEPRVKALMAAFATERQSLSDSLKKLASQLQISETKNADLRDDAERLKRDLLKAERVEEDLRRNLVEQTEIMRENQQLRSQLGVAQSDLANASGRKQQLEGELAAVRAELRDHKQHLHDAISRIAELQRQLQDANAEKSRLTDRIIGLEKTIGTLRNTETELRAQLSTAADERKALNSELEEMRRRIVQMESEKKDVDNQLEEVNKARIIMTKKIEILETEKHSAELVISETASQREAIERSLNALERENKELYKNCAQLQQQIAQLEMDNGERLIALTTKQKEDHEKFVAAVKAEKVQVERIVENRDRAQKSRIRQLENQLSMMREQLDNERARSHQMSERFIVNETNRRVSSSSFRLSGDAAGVAAATILHPQTDRLDYVFANRSALSSYYTVPTEQHASRGKEAYRTSSTIKSSEGTTRESYTYQSRTVSSNIIEQANGMTSSASGEGMSRAYPPTEVNQGDVTGRKSRPATRKQQMKSTFSE.

4 coiled-coil regions span residues lysine 82–valine 129, glutamate 152–serine 317, valine 385–leucine 1747, and glutamate 1770–isoleucine 1813. 2 disordered regions span residues proline 1865–tyrosine 1896 and methionine 1912–glutamate 1955. Over residues arginine 1878–tyrosine 1896 the composition is skewed to polar residues. Residues arginine 1938–glutamine 1948 are compositionally biased toward basic residues.

Its subcellular location is the cytoplasm. The protein localises to the cytoskeleton. The protein resides in the microtubule organizing center. It localises to the centrosome. It is found in the chromosome. Its subcellular location is the centromere. The protein localises to the kinetochore. The protein resides in the spindle. May play a role in the organization of the spindle apparatus and its interaction with the centromeres. This Parascaris univalens (Nematode worm) protein is 227 kDa spindle- and centromere-associated protein (PUMA1).